Here is a 451-residue protein sequence, read N- to C-terminus: DNA double-strand break repair protein Mre11 (451 aa).

Mn(2+) contacts are provided by Asp8, His10, Asp49, and Asn84. His85 (proton donor) is an active-site residue. Mn(2+) contacts are provided by His168, His198, and His200. Positions 374-451 are disordered; the sequence is REDNPPDLGD…GRPSLDRWIG (78 aa). Positions 396–416 are enriched in acidic residues; the sequence is GSEESSEEPEESDGEEVGLEV.

Belongs to the MRE11/RAD32 family. Homodimer. Forms a heterotetramer composed of two Mre11 subunits and two Rad50 subunits. Mn(2+) serves as cofactor.

Nuclease activity is regulated by Rad50. Functionally, part of the Rad50/Mre11 complex, which is involved in the early steps of DNA double-strand break (DSB) repair. The complex may facilitate opening of the processed DNA ends to aid in the recruitment of HerA and NurA. Mre11 binds to DSB ends and has both double-stranded 3'-5' exonuclease activity and single-stranded endonuclease activity. In Methanopyrus kandleri (strain AV19 / DSM 6324 / JCM 9639 / NBRC 100938), this protein is DNA double-strand break repair protein Mre11.